A 269-amino-acid polypeptide reads, in one-letter code: Chymotrypsin-like elastase family member 3B (269 aa).

An N-terminal signal peptide occupies residues 1–16 (MLRLLSSLLLVALASG). A propeptide spans 17–27 (CGQPSHNPSSR) (activation peptide). One can recognise a Peptidase S1 domain in the interval 28–267 (VVNGEEAVPH…FIDWIEETIA (240 aa)). The cysteines at positions 57 and 73 are disulfide-linked. Catalysis depends on charge relay system residues His-72 and Asp-122. 3 disulfide bridges follow: Cys-156/Cys-222, Cys-187/Cys-203, and Cys-212/Cys-243. Ser-216 functions as the Charge relay system in the catalytic mechanism.

This sequence belongs to the peptidase S1 family. Elastase subfamily.

The enzyme catalyses Preferential cleavage: Ala-|-Xaa. Does not hydrolyze elastin.. Efficient protease with alanine specificity but only little elastolytic activity. The chain is Chymotrypsin-like elastase family member 3B (Cela3b) from Mus musculus (Mouse).